We begin with the raw amino-acid sequence, 383 residues long: 1-deoxy-D-xylulose 5-phosphate reductoisomerase (383 aa).

5 residues coordinate NADPH: threonine 10, glycine 11, serine 12, isoleucine 13, and asparagine 123. 1-deoxy-D-xylulose 5-phosphate is bound at residue lysine 124. Residue glutamate 125 coordinates NADPH. Aspartate 149 contributes to the Mn(2+) binding site. 1-deoxy-D-xylulose 5-phosphate is bound by residues serine 150, glutamate 151, serine 175, and histidine 198. Glutamate 151 serves as a coordination point for Mn(2+). Residue glycine 204 coordinates NADPH. 1-deoxy-D-xylulose 5-phosphate contacts are provided by serine 211, asparagine 216, lysine 217, and glutamate 220. Glutamate 220 is a binding site for Mn(2+).

The protein belongs to the DXR family. Requires Mg(2+) as cofactor. It depends on Mn(2+) as a cofactor.

It catalyses the reaction 2-C-methyl-D-erythritol 4-phosphate + NADP(+) = 1-deoxy-D-xylulose 5-phosphate + NADPH + H(+). It participates in isoprenoid biosynthesis; isopentenyl diphosphate biosynthesis via DXP pathway; isopentenyl diphosphate from 1-deoxy-D-xylulose 5-phosphate: step 1/6. Functionally, catalyzes the NADPH-dependent rearrangement and reduction of 1-deoxy-D-xylulose-5-phosphate (DXP) to 2-C-methyl-D-erythritol 4-phosphate (MEP). This chain is 1-deoxy-D-xylulose 5-phosphate reductoisomerase, found in Desulfosudis oleivorans (strain DSM 6200 / JCM 39069 / Hxd3) (Desulfococcus oleovorans).